The primary structure comprises 384 residues: Spermidine/putrescine import ATP-binding protein PotA (384 aa).

Residues 6 to 238 (ITFNNVSKTF…PINHFVANFI (233 aa)) form the ABC transporter domain. An ATP-binding site is contributed by 40-47 (GASGSGKS).

This sequence belongs to the ABC transporter superfamily. Spermidine/putrescine importer (TC 3.A.1.11.1) family. In terms of assembly, the complex is composed of two ATP-binding proteins (PotA), two transmembrane proteins (PotB and PotC) and a solute-binding protein (PotD).

It localises to the cell membrane. It carries out the reaction ATP + H2O + polyamine-[polyamine-binding protein]Side 1 = ADP + phosphate + polyamineSide 2 + [polyamine-binding protein]Side 1.. Part of the ABC transporter complex PotABCD involved in spermidine/putrescine import. Responsible for energy coupling to the transport system. The chain is Spermidine/putrescine import ATP-binding protein PotA from Streptococcus pyogenes serotype M6 (strain ATCC BAA-946 / MGAS10394).